A 583-amino-acid polypeptide reads, in one-letter code: Radixin (583 aa).

An FERM domain is found at 5-295; it reads INVRVTTMDA…GNHELYMRRR (291 aa). A 1,2-diacyl-sn-glycero-3-phospho-(1D-myo-inositol) contacts are provided by residues 60-63 and K278; that span reads KLNK. 2 disordered regions span residues 310–336 and 436–527; these read REEK…AEKE and KKKE…VKKQ. 2 stretches are compositionally biased toward basic and acidic residues: residues 436–447 and 455–464; these read KKKEEEASEWQH and DLEKTKEELK. The span at 469–480 shows a compositional bias: pro residues; it reads APPPPPPPPVIP. Composition is skewed to basic and acidic residues over residues 483–492 and 506–525; these read ENEHDEHDEN and MNHR…ERVK.

The protein resides in the cell membrane. It is found in the cytoplasm. It localises to the cytoskeleton. Probably plays a crucial role in the binding of the barbed end of actin filaments to the plasma membrane. The polypeptide is Radixin (RDX) (Gallus gallus (Chicken)).